We begin with the raw amino-acid sequence, 140 residues long: Blasticidin-S deaminase (140 aa).

Residues 8-140 (QQDLELVEVA…ELIPLKYTRN (133 aa)) form the CMP/dCMP-type deaminase domain. Cys-59 provides a ligand contact to Zn(2+). The active-site Proton donor is the Glu-61. Zn(2+) contacts are provided by Cys-100 and Cys-103.

This sequence belongs to the cytidine and deoxycytidylate deaminase family. Zn(2+) is required as a cofactor.

The enzyme catalyses blasticidin S + H2O + H(+) = deaminohydroxyblasticidin S + NH4(+). In terms of biological role, catalyzes the deamination of the cytosine moiety of the antibiotics blasticidin S, cytomycin and acetylblasticidin S. In Bacillus cereus, this protein is Blasticidin-S deaminase (bsr).